Reading from the N-terminus, the 322-residue chain is Phosphatidylserine decarboxylase proenzyme (322 aa).

Catalysis depends on charge relay system; for autoendoproteolytic cleavage activity residues Asp-90, His-147, and Ser-254. The active-site Schiff-base intermediate with substrate; via pyruvic acid; for decarboxylase activity is the Ser-254. At Ser-254 the chain carries Pyruvic acid (Ser); by autocatalysis. The disordered stretch occupies residues 292 to 322 (TPDAEPSPLPAEEIEAEHDASPLVDDKKDQV). The span at 308 to 322 (EHDASPLVDDKKDQV) shows a compositional bias: basic and acidic residues.

It belongs to the phosphatidylserine decarboxylase family. PSD-B subfamily. Prokaryotic type I sub-subfamily. In terms of assembly, heterodimer of a large membrane-associated beta subunit and a small pyruvoyl-containing alpha subunit. It depends on pyruvate as a cofactor. In terms of processing, is synthesized initially as an inactive proenzyme. Formation of the active enzyme involves a self-maturation process in which the active site pyruvoyl group is generated from an internal serine residue via an autocatalytic post-translational modification. Two non-identical subunits are generated from the proenzyme in this reaction, and the pyruvate is formed at the N-terminus of the alpha chain, which is derived from the carboxyl end of the proenzyme. The autoendoproteolytic cleavage occurs by a canonical serine protease mechanism, in which the side chain hydroxyl group of the serine supplies its oxygen atom to form the C-terminus of the beta chain, while the remainder of the serine residue undergoes an oxidative deamination to produce ammonia and the pyruvoyl prosthetic group on the alpha chain. During this reaction, the Ser that is part of the protease active site of the proenzyme becomes the pyruvoyl prosthetic group, which constitutes an essential element of the active site of the mature decarboxylase.

Its subcellular location is the cell membrane. The catalysed reaction is a 1,2-diacyl-sn-glycero-3-phospho-L-serine + H(+) = a 1,2-diacyl-sn-glycero-3-phosphoethanolamine + CO2. It functions in the pathway phospholipid metabolism; phosphatidylethanolamine biosynthesis; phosphatidylethanolamine from CDP-diacylglycerol: step 2/2. In terms of biological role, catalyzes the formation of phosphatidylethanolamine (PtdEtn) from phosphatidylserine (PtdSer). This Escherichia coli O7:K1 (strain IAI39 / ExPEC) protein is Phosphatidylserine decarboxylase proenzyme.